Consider the following 209-residue polypeptide: Large ribosomal subunit protein uL3 (209 aa).

A disordered region spans residues 128–163 (FGGGSRTHGQSDRLRAPGSVGGSSDPSRTFRGTRMA).

This sequence belongs to the universal ribosomal protein uL3 family. Part of the 50S ribosomal subunit. Forms a cluster with proteins L14 and L19.

Functionally, one of the primary rRNA binding proteins, it binds directly near the 3'-end of the 23S rRNA, where it nucleates assembly of the 50S subunit. In Chlorobium phaeobacteroides (strain DSM 266 / SMG 266 / 2430), this protein is Large ribosomal subunit protein uL3.